Consider the following 478-residue polypeptide: Methionine aminopeptidase 2-1 (478 aa).

The tract at residues 1 to 124 (MGSKSPEGHN…PRVPLSTLFP (124 aa)) is disordered. Positions 46–56 (NDDDDADDDEK) are enriched in acidic residues. Positions 92–104 (KKKKKRKRSKKKA) are enriched in basic residues. His230 serves as a coordination point for substrate. Asp251, Asp262, and His331 together coordinate a divalent metal cation. Substrate is bound at residue His339. A divalent metal cation contacts are provided by Glu364 and Glu459.

Belongs to the peptidase M24A family. Methionine aminopeptidase eukaryotic type 2 subfamily. It depends on Co(2+) as a cofactor. Zn(2+) serves as cofactor. The cofactor is Mn(2+). Fe(2+) is required as a cofactor.

It is found in the cytoplasm. It carries out the reaction Release of N-terminal amino acids, preferentially methionine, from peptides and arylamides.. Functionally, cotranslationally removes the N-terminal methionine from nascent proteins. The N-terminal methionine is often cleaved when the second residue in the primary sequence is small and uncharged (Met-Ala-, Cys, Gly, Pro, Ser, Thr, or Val). The sequence is that of Methionine aminopeptidase 2-1 from Aspergillus clavatus (strain ATCC 1007 / CBS 513.65 / DSM 816 / NCTC 3887 / NRRL 1 / QM 1276 / 107).